The chain runs to 1315 residues: Probable nucleoporin C890.06 (1315 aa).

The protein belongs to the non-repetitive/WGA-negative nucleoporin family.

It is found in the cytoplasm. The protein localises to the nucleus. This chain is Probable nucleoporin C890.06, found in Schizosaccharomyces pombe (strain 972 / ATCC 24843) (Fission yeast).